The chain runs to 398 residues: Alpha-(1,3)-fucosyltransferase 4 (398 aa).

The Cytoplasmic portion of the chain corresponds to 1 to 15 (MRARWGRRGARRGGP). Residues 16–40 (GLPGTHLALLAASLLSSSVAIYVCW) traverse the membrane as a helical; Signal-anchor for type II membrane protein segment. At 41 to 398 (KQLPPLPWAS…VPNLAGWFQQ (358 aa)) the chain is on the lumenal side. N-linked (GlcNAc...) asparagine glycans are attached at residues N84, N183, and N311.

It belongs to the glycosyltransferase 10 family.

Its subcellular location is the golgi apparatus. The protein localises to the golgi stack membrane. The catalysed reaction is a beta-D-galactosyl-(1-&gt;4)-N-acetyl-beta-D-glucosaminyl derivative + GDP-beta-L-fucose = a beta-D-galactosyl-(1-&gt;4)-[alpha-L-fucosyl-(1-&gt;3)]-N-acetyl-beta-D-glucosaminyl derivative + GDP + H(+). It catalyses the reaction an N-acetyl-alpha-neuraminyl-(2-&gt;3)-beta-D-galactosyl-(1-&gt;4)-N-acetyl-beta-D-glucosaminyl derivative + GDP-beta-L-fucose = an alpha-Neu5Ac-(2-&gt;3)-beta-D-Gal-(1-&gt;4)-[alpha-L-Fuc-(1-&gt;3)]-beta-D-GlcNAc derivative + GDP + H(+). The enzyme catalyses an alpha-Neu5Ac-(2-&gt;3)-beta-D-Gal-(1-&gt;4)-beta-D-GlcNAc-(1-&gt;3)-beta-D-Gal-(1-&gt;4)-beta-D-GlcNAc derivative + GDP-beta-L-fucose = an alpha-Neu5Ac-(2-&gt;3)-beta-D-Gal-(1-&gt;4)-beta-D-GlcNAc-(1-&gt;3)-beta-D-Gal-(1-&gt;4)-[alpha-L-Fuc-(1-&gt;3)]-beta-D-GlcNAc derivative + GDP + H(+). It carries out the reaction an alpha-Neu5Ac-(2-&gt;3)-beta-D-Gal-(1-&gt;4)-beta-D-GlcNAc6S derivative + GDP-beta-L-fucose = an alpha-Neu5Ac-(2-&gt;3)-beta-D-Gal-(1-&gt;4)-[alpha-L-Fuc-(1-&gt;3)]-beta-D-GlcNAc6S derivative + GDP + H(+). It functions in the pathway protein modification; protein glycosylation. Its function is as follows. Catalyzes alpha(1-&gt;3) linkage of fucosyl moiety transferred from GDP-beta-L-fucose to N-acetyl glucosamine (GlcNAc) within type 2 lactosamine (LacNAc, Gal-beta(1-&gt;4)GlcNAc) glycan attached to N- or O-linked glycoproteins. Robustly fucosylates nonsialylated distal LacNAc unit of the polylactosamine chain to form Lewis X antigen (CD15), a glycan determinant known to mediate important cellular functions in development and immunity. Fucosylates with lower efficiency sialylated LacNAc acceptors to form sialyl Lewis X and 6-sulfo sialyl Lewis X determinants that serve as recognition epitopes for C-type lectins. Together with FUT7 contributes to SELE, SELL and SELP selectin ligand biosynthesis and selectin-dependent lymphocyte homing, leukocyte migration and blood leukocyte homeostasis. In a cell type specific manner, may also fucosylate the internal LacNAc unit of the polylactosamine chain to form VIM-2 antigen that serves as recognition epitope for SELE. This chain is Alpha-(1,3)-fucosyltransferase 4 (FUT4), found in Bos taurus (Bovine).